Consider the following 545-residue polypeptide: Cannabidiolic acid synthase-like 2 (545 aa).

A signal peptide spans 1–28 (MKCSTFCFWYVCKIIFFFLSFNIQISIA). Cys37 and Cys99 are oxidised to a cystine. N-linked (GlcNAc...) asparagine glycosylation is found at Asn45, Asn65, Asn89, and Asn168. An FAD-binding PCMH-type domain is found at 77–251 (TTPKPLVITT…AAWKIRLVAV (175 aa)). A cross-link (6-(S-cysteinyl)-8alpha-(pros-histidyl)-FAD (His-Cys)) is located at residues 114-176 (HDAEGMSYIS…ENLSFPAGYC (63 aa)). His292 contacts substrate. Residues Asn297, Asn305, Asn329, and Asn361 are each glycosylated (N-linked (GlcNAc...) asparagine). Tyr417 contributes to the substrate binding site. Asn467 is a glycosylation site (N-linked (GlcNAc...) asparagine). Tyr484 (proton acceptor) is an active-site residue. The N-linked (GlcNAc...) asparagine glycan is linked to Asn499.

The protein belongs to the oxygen-dependent FAD-linked oxidoreductase family. FAD serves as cofactor. In terms of processing, the FAD cofactor is bound via a bicovalent 6-S-cysteinyl, 8alpha-N1-histidyl FAD linkage.

The protein localises to the secreted. Functionally, has no cannabidiolic acid synthase activity. The protein is Cannabidiolic acid synthase-like 2 (CBDAS3) of Cannabis sativa (Hemp).